The sequence spans 100 residues: Urease subunit gamma (100 aa).

This sequence belongs to the urease gamma subunit family. As to quaternary structure, heterotrimer of UreA (gamma), UreB (beta) and UreC (alpha) subunits. Three heterotrimers associate to form the active enzyme.

The protein localises to the cytoplasm. It catalyses the reaction urea + 2 H2O + H(+) = hydrogencarbonate + 2 NH4(+). It participates in nitrogen metabolism; urea degradation; CO(2) and NH(3) from urea (urease route): step 1/1. The chain is Urease subunit gamma from Pseudoalteromonas translucida (strain TAC 125).